We begin with the raw amino-acid sequence, 380 residues long: MDINTDKYKNITRNLEREMINLNPIQRGGILPTESKKIIYEYWDGYSVCDYCSGRLDQIETPPINEFLEDMSKFLGMDITRPTHGARESKYAVMNSICKEGDYVVLDGNAHYTSYVALERAKLNYEKTDIEEYPTFRVIPESYAEKIDMLEDSKKNIGLILLTHVDGNYGNVADVEKVGKIAKSKGYPFLLNCAYSAGRMPIDGKKLNVDFIAASGHKSMAASGPCGLLSINKKYENEVLETSKVNVLKELQMLGCTSRGIPILSLMASFEHLIERVKKWDLELEKTRKVVNELEPLGFKQIGEKPRNHDIIRFETPILDEIAEKDKRRGFFFYEELKKRGIGGIRRGVTKEFKMSVYGLTNTQVDYVINSMKSIINELR.

Pyridoxal 5'-phosphate-binding positions include 86 to 87, Asn-192, and 215 to 217; these read AR and SGH. N6-(pyridoxal phosphate)lysine is present on Lys-218.

The protein belongs to the SepCysS family. In terms of assembly, homodimer. Interacts with SepRS. Requires pyridoxal 5'-phosphate as cofactor.

It catalyses the reaction O-phospho-L-seryl-tRNA(Cys) + hydrogen sulfide + H(+) = L-cysteinyl-tRNA(Cys) + phosphate. Functionally, converts O-phospho-L-seryl-tRNA(Cys) (Sep-tRNA(Cys)) to L-cysteinyl-tRNA(Cys) (Cys-tRNA(Cys)). The protein is O-phospho-L-seryl-tRNA:Cys-tRNA synthase of Methanococcus maripaludis (strain DSM 14266 / JCM 13030 / NBRC 101832 / S2 / LL).